A 129-amino-acid polypeptide reads, in one-letter code: Cytochrome c oxidase subunit 5B, mitochondrial (129 aa).

Residues 1-31 (MASRLLRGVGALASQALRARGPNGVSVVRSM) constitute a mitochondrion transit peptide. Residues Lys68 and Lys86 each carry the N6-acetyllysine modification. Zn(2+) is bound by residues Cys91, Cys93, Cys113, and Cys116. At Lys121 the chain carries N6-acetyllysine.

The protein belongs to the cytochrome c oxidase subunit 5B family. In terms of assembly, component of the cytochrome c oxidase (complex IV, CIV), a multisubunit enzyme composed of 14 subunits. The complex is composed of a catalytic core of 3 subunits MT-CO1, MT-CO2 and MT-CO3, encoded in the mitochondrial DNA, and 11 supernumerary subunits COX4I1 (or COX4I2), COX5A, COX5B, COX6A2 (or COX6A1), COX6B1 (or COX6B2), COX6C, COX7A1 (or COX7A2), COX7B, COX7C, COX8B and NDUFA4, which are encoded in the nuclear genome. The complex exists as a monomer or a dimer and forms supercomplexes (SCs) in the inner mitochondrial membrane with NADH-ubiquinone oxidoreductase (complex I, CI) and ubiquinol-cytochrome c oxidoreductase (cytochrome b-c1 complex, complex III, CIII), resulting in different assemblies (supercomplex SCI(1)III(2)IV(1) and megacomplex MCI(2)III(2)IV(2)).

It localises to the mitochondrion inner membrane. It functions in the pathway energy metabolism; oxidative phosphorylation. Component of the cytochrome c oxidase, the last enzyme in the mitochondrial electron transport chain which drives oxidative phosphorylation. The respiratory chain contains 3 multisubunit complexes succinate dehydrogenase (complex II, CII), ubiquinol-cytochrome c oxidoreductase (cytochrome b-c1 complex, complex III, CIII) and cytochrome c oxidase (complex IV, CIV), that cooperate to transfer electrons derived from NADH and succinate to molecular oxygen, creating an electrochemical gradient over the inner membrane that drives transmembrane transport and the ATP synthase. Cytochrome c oxidase is the component of the respiratory chain that catalyzes the reduction of oxygen to water. Electrons originating from reduced cytochrome c in the intermembrane space (IMS) are transferred via the dinuclear copper A center (CU(A)) of subunit 2 and heme A of subunit 1 to the active site in subunit 1, a binuclear center (BNC) formed by heme A3 and copper B (CU(B)). The BNC reduces molecular oxygen to 2 water molecules using 4 electrons from cytochrome c in the IMS and 4 protons from the mitochondrial matrix. This is Cytochrome c oxidase subunit 5B, mitochondrial (COX5B) from Bos taurus (Bovine).